Reading from the N-terminus, the 416-residue chain is Enterobactin exporter EntS (416 aa).

At 1-21 (MNKQSWLLNLSLLKTHPAFRA) the chain is on the cytoplasmic side. The helical transmembrane segment at 22–42 (VFLARFISIVSLGLLGVAVPV) threads the bilayer. Topologically, residues 43–55 (QIQMMTHSTWQVG) are periplasmic. The helical transmembrane segment at 56-76 (LSVTLTGGAMFVGLMVGGVLA) threads the bilayer. Over 77-83 (DRYERKK) the chain is Cytoplasmic. A helical transmembrane segment spans residues 84 to 104 (VILLARGTCGIGFIGLCLNAL). The Periplasmic portion of the chain corresponds to 105-109 (LPEPS). The helical transmembrane segment at 110–130 (LLAIYLLGLWDGFFASLGVTA) threads the bilayer. Residues 131–156 (LLAATPALVGRENLMQAGALTMLTVR) lie on the Cytoplasmic side of the membrane. Residues 157 to 177 (LGSVISPMIGGLLLATGGVAW) form a helical membrane-spanning segment. Position 178 (Asn178) is a topological domain, periplasmic. A helical transmembrane segment spans residues 179–199 (YGLAAAGTFITLLPLLSLPAL). Topologically, residues 200–218 (PPPPQPREHPLKSLLAGFR) are cytoplasmic. A helical membrane pass occupies residues 219–239 (FLLASPLVGGIALLGGLLTMA). The Periplasmic segment spans residues 240-256 (SAVRVLYPALADNWQMS). Residues 257 to 277 (AAEIGFLYAAIPLGAAIGALT) form a helical membrane-spanning segment. Topologically, residues 278-287 (SGKLAHSARP) are cytoplasmic. Residues 288 to 307 (GLLMLLSTLGSFLAIGLFGL) traverse the membrane as a helical segment. Residues 308-313 (MPMWIL) are Periplasmic-facing. The helical transmembrane segment at 314–336 (GVVCLALFGWLSAVSSLLQYTML) threads the bilayer. Over 337 to 356 (QTQTPEAMLGRINGLWTAQN) the chain is Cytoplasmic. A helical transmembrane segment spans residues 357 to 377 (VTGDAIGAALLGGLGAMMTPV). Residue Ala378 is a topological domain, periplasmic. A helical membrane pass occupies residues 379-399 (SASASGFGLLIIGVLLLLVLV). Over 400-416 (ELRRFRQTPPQVTASDS) the chain is Cytoplasmic.

It belongs to the major facilitator superfamily. EntS (TC 2.A.1.38) family.

It is found in the cell inner membrane. Its function is as follows. Component of an export pathway for enterobactin. The chain is Enterobactin exporter EntS from Shigella boydii serotype 18 (strain CDC 3083-94 / BS512).